We begin with the raw amino-acid sequence, 232 residues long: Large ribosomal subunit protein uL1 (232 aa).

Belongs to the universal ribosomal protein uL1 family. Part of the 50S ribosomal subunit.

Its function is as follows. Binds directly to 23S rRNA. The L1 stalk is quite mobile in the ribosome, and is involved in E site tRNA release. Functionally, protein L1 is also a translational repressor protein, it controls the translation of the L11 operon by binding to its mRNA. The protein is Large ribosomal subunit protein uL1 of Roseobacter denitrificans (strain ATCC 33942 / OCh 114) (Erythrobacter sp. (strain OCh 114)).